The chain runs to 65 residues: MNGRLLEIVACPICQGRLKYDSENEQLICHFDHIAYPIKQGIPILLSDQAISLSTSLTNPEQQNQ.

The protein belongs to the UPF0434 family.

The sequence is that of UPF0434 protein HS_0657 from Histophilus somni (strain 129Pt) (Haemophilus somnus).